The following is a 903-amino-acid chain: Ras and Rab interactor 2 (903 aa).

A disordered region spans residues 44-73; it reads NGLEPSETHSMVRHKDGGYSEDKDGKTCPR. Over residues 56–73 the composition is skewed to basic and acidic residues; sequence RHKDGGYSEDKDGKTCPR. The SH2 domain occupies 97 to 190; sequence WLQLSLSEEE…VLPFTLKLPY (94 aa). 2 disordered regions span residues 282 to 455 and 471 to 491; these read QDLS…EFDR and EDYE…SKKK. Over residues 306–315 the composition is skewed to pro residues; the sequence is SPPPRPPPPA. Positions 318–338 are enriched in polar residues; it reads SLHTSPGLSRTEPQTSMPETV. The residue at position 366 (S366) is a Phosphoserine. Pro residues predominate over residues 419–431; that stretch reads APPPGSESQPPPC. A compositionally biased stretch (low complexity) spans 439-450; that stretch reads SDMSLSTSSSDS. The interval 506–775 is interaction with RAB5B; that stretch reads LRKMSGVFSS…ARLLSSEARD (270 aa). S510 is subject to Phosphoserine. A Phosphothreonine modification is found at T518. The VPS9 domain occupies 627-766; it reads DGSWKQLKEN…IKNFQEEQAA (140 aa). A Ras-associating domain is found at 796-887; that stretch reads FQNYLRVAFQ…FHFVYKRIKS (92 aa).

The protein belongs to the RIN (Ras interaction/interference) family. In terms of assembly, homotetramer; probably composed of anti-parallel linkage of two parallel dimers. Interacts with Ras. Interacts with RAB5B, with a much higher affinity for GTP-bound activated RAB5B. Does not interact with other members of the Rab family.

Its subcellular location is the cytoplasm. Functionally, ras effector protein. May function as an upstream activator and/or downstream effector for RAB5B in endocytic pathway. May function as a guanine nucleotide exchange (GEF) of RAB5B, required for activating the RAB5 proteins by exchanging bound GDP for free GTP. The sequence is that of Ras and Rab interactor 2 (Rin2) from Mus musculus (Mouse).